Reading from the N-terminus, the 103-residue chain is MATYAIVKTGGKQYKVAVGDVVKVEKLDSEPGSNVSLPVALVVDGAKVTSDAAALAKVAVTGEVLEHTKGPKIRIHKFRNKTGYHKRQGHRQQLTVLKVTGIK.

Belongs to the bacterial ribosomal protein bL21 family. Part of the 50S ribosomal subunit. Contacts protein L20.

Its function is as follows. This protein binds to 23S rRNA in the presence of protein L20. In Mycolicibacterium paratuberculosis (strain ATCC BAA-968 / K-10) (Mycobacterium paratuberculosis), this protein is Large ribosomal subunit protein bL21.